The sequence spans 228 residues: MEIRQLKYFVAVAEAGGFGTAAQRMHISQPPLTRQIQALERDIGAKLFERTARGVELTAAGKVFLDDARQLLALVQRSSRRSQAAARGESGELKLVYFGTPVFETVPAFVRTFLATYPDATVAVSHMTKEAQLESLLSGVVDIGFGRFYPVTEGVSSWNIGTETLHVAAADPWDTRVSRARAVVDLLDVPLILYPRGDRPSFADKVVSIFRDRFKKSPGGLLTFSASC.

Residues 1–58 (MEIRQLKYFVAVAEAGGFGTAAQRMHISQPPLTRQIQALERDIGAKLFERTARGVELT) enclose the HTH lysR-type domain. Residues 18 to 37 (FGTAAQRMHISQPPLTRQIQ) constitute a DNA-binding region (H-T-H motif).

Belongs to the LysR transcriptional regulatory family.

It localises to the cytoplasm. Its function is as follows. Does not seem to be involved in the regulation of 3-chlorocatechol degradation. Does not activate the expression of its presumed target operon, tfdCDEF. The sequence is that of HTH-type transcriptional regulator TfdT (tfdT) from Cupriavidus pinatubonensis (strain JMP 134 / LMG 1197) (Cupriavidus necator (strain JMP 134)).